Here is a 363-residue protein sequence, read N- to C-terminus: Probable auxin efflux carrier component 5a (363 aa).

A run of 10 helical transmembrane segments spans residues 7-27 (VYKV…GYGS), 39-59 (CDAV…FEFT), 72-92 (VAAD…WARF), 103-123 (SITS…VPMA), 134-154 (LVVQ…LFVL), 222-242 (FVGI…PSAF), 246-266 (VLIM…LFMA), 281-301 (LGLV…SIAV), 307-327 (VLRV…FIFA), and 342-362 (IFGM…LELI).

This sequence belongs to the auxin efflux carrier (TC 2.A.69.1) family. Expressed in leaves, shoot apex and panicles. Expressed in roots, stem bases, stems, leaves and young panicles.

The protein localises to the membrane. In terms of biological role, may act as a component of the auxin efflux carrier. The sequence is that of Probable auxin efflux carrier component 5a from Oryza sativa subsp. japonica (Rice).